The following is a 132-amino-acid chain: S-adenosylmethionine decarboxylase proenzyme (132 aa).

The active-site Schiff-base intermediate with substrate; via pyruvic acid is S65. S65 is modified (pyruvic acid (Ser); by autocatalysis). The Proton acceptor; for processing activity role is filled by H70. The Proton donor; for catalytic activity role is filled by C85.

The protein belongs to the prokaryotic AdoMetDC family. Type 1 subfamily. Heterotetramer of two alpha and two beta chains arranged as a dimer of alpha/beta heterodimers. Pyruvate serves as cofactor. Post-translationally, is synthesized initially as an inactive proenzyme. Formation of the active enzyme involves a self-maturation process in which the active site pyruvoyl group is generated from an internal serine residue via an autocatalytic post-translational modification. Two non-identical subunits are generated from the proenzyme in this reaction, and the pyruvate is formed at the N-terminus of the alpha chain, which is derived from the carboxyl end of the proenzyme. The post-translation cleavage follows an unusual pathway, termed non-hydrolytic serinolysis, in which the side chain hydroxyl group of the serine supplies its oxygen atom to form the C-terminus of the beta chain, while the remainder of the serine residue undergoes an oxidative deamination to produce ammonia and the pyruvoyl group blocking the N-terminus of the alpha chain.

It catalyses the reaction S-adenosyl-L-methionine + H(+) = S-adenosyl 3-(methylsulfanyl)propylamine + CO2. It functions in the pathway amine and polyamine biosynthesis; S-adenosylmethioninamine biosynthesis; S-adenosylmethioninamine from S-adenosyl-L-methionine: step 1/1. Functionally, catalyzes the decarboxylation of S-adenosylmethionine to S-adenosylmethioninamine (dcAdoMet), the propylamine donor required for the synthesis of the polyamines spermine and spermidine from the diamine putrescine. The protein is S-adenosylmethionine decarboxylase proenzyme of Symbiobacterium thermophilum (strain DSM 24528 / JCM 14929 / IAM 14863 / T).